The chain runs to 564 residues: Dihydroxy-acid dehydratase (564 aa).

C53 lines the [2Fe-2S] cluster pocket. D85 serves as a coordination point for Mg(2+). Position 126 (C126) interacts with [2Fe-2S] cluster. Mg(2+) is bound by residues D127 and K128. At K128 the chain carries N6-carboxylysine. C203 serves as a coordination point for [2Fe-2S] cluster. E454 provides a ligand contact to Mg(2+). Residue S480 is the Proton acceptor of the active site.

Belongs to the IlvD/Edd family. As to quaternary structure, homodimer. The cofactor is [2Fe-2S] cluster. Mg(2+) serves as cofactor.

The catalysed reaction is (2R)-2,3-dihydroxy-3-methylbutanoate = 3-methyl-2-oxobutanoate + H2O. The enzyme catalyses (2R,3R)-2,3-dihydroxy-3-methylpentanoate = (S)-3-methyl-2-oxopentanoate + H2O. The protein operates within amino-acid biosynthesis; L-isoleucine biosynthesis; L-isoleucine from 2-oxobutanoate: step 3/4. It participates in amino-acid biosynthesis; L-valine biosynthesis; L-valine from pyruvate: step 3/4. Functions in the biosynthesis of branched-chain amino acids. Catalyzes the dehydration of (2R,3R)-2,3-dihydroxy-3-methylpentanoate (2,3-dihydroxy-3-methylvalerate) into 2-oxo-3-methylpentanoate (2-oxo-3-methylvalerate) and of (2R)-2,3-dihydroxy-3-methylbutanoate (2,3-dihydroxyisovalerate) into 2-oxo-3-methylbutanoate (2-oxoisovalerate), the penultimate precursor to L-isoleucine and L-valine, respectively. In Clavibacter michiganensis subsp. michiganensis (strain NCPPB 382), this protein is Dihydroxy-acid dehydratase.